Consider the following 178-residue polypeptide: Cytidylate kinase 2 (178 aa).

Glycine 7 to threonine 15 serves as a coordination point for ATP.

It belongs to the cytidylate kinase family. Type 2 subfamily.

It localises to the cytoplasm. The catalysed reaction is CMP + ATP = CDP + ADP. It carries out the reaction dCMP + ATP = dCDP + ADP. This chain is Cytidylate kinase 2, found in Borrelia garinii subsp. bavariensis (strain ATCC BAA-2496 / DSM 23469 / PBi) (Borreliella bavariensis).